The following is a 479-amino-acid chain: Glycogen synthase (479 aa).

ADP-alpha-D-glucose is bound at residue Lys-15.

The protein belongs to the glycosyltransferase 1 family. Bacterial/plant glycogen synthase subfamily.

The catalysed reaction is [(1-&gt;4)-alpha-D-glucosyl](n) + ADP-alpha-D-glucose = [(1-&gt;4)-alpha-D-glucosyl](n+1) + ADP + H(+). The protein operates within glycan biosynthesis; glycogen biosynthesis. In terms of biological role, synthesizes alpha-1,4-glucan chains using ADP-glucose. This is Glycogen synthase from Clostridium beijerinckii (strain ATCC 51743 / NCIMB 8052) (Clostridium acetobutylicum).